We begin with the raw amino-acid sequence, 89 residues long: Small ribosomal subunit protein bS20 (89 aa).

A disordered region spans residues 1 to 28 (MTLANIKSAKKRAVQSEKSRQHNASQRS).

It belongs to the bacterial ribosomal protein bS20 family.

Binds directly to 16S ribosomal RNA. The protein is Small ribosomal subunit protein bS20 of Mannheimia succiniciproducens (strain KCTC 0769BP / MBEL55E).